We begin with the raw amino-acid sequence, 589 residues long: Malto-oligosyltrehalose trehalohydrolase (589 aa).

A substrate-binding site is contributed by 256-261; that stretch reads GFDAVH. Asp258 serves as the catalytic Nucleophile. Glu295 serves as the catalytic Proton donor. Residues 320 to 324 and 390 to 395 contribute to the substrate site; these read DDFHT and HDQIGN.

This sequence belongs to the glycosyl hydrolase 13 family.

It localises to the cytoplasm. It carries out the reaction hydrolysis of (1-&gt;4)-alpha-D-glucosidic linkage in 4-alpha-D-[(1-&gt;4)-alpha-D-glucanosyl]n trehalose to yield trehalose and (1-&gt;4)-alpha-D-glucan.. Its pathway is glycan biosynthesis; trehalose biosynthesis. The chain is Malto-oligosyltrehalose trehalohydrolase (treZ) from Brevibacterium helvolum.